A 203-amino-acid polypeptide reads, in one-letter code: V-type ATP synthase subunit D (203 aa).

This sequence belongs to the V-ATPase D subunit family.

In terms of biological role, produces ATP from ADP in the presence of a proton gradient across the membrane. The sequence is that of V-type ATP synthase subunit D from Streptococcus pneumoniae (strain CGSP14).